The following is a 730-amino-acid chain: Semaphorin-1A (730 aa).

The first 20 residues, 1 to 20 (MRAALVAVAALLWVALHAAA), serve as a signal peptide directing secretion. The Extracellular segment spans residues 21–630 (WVNDVSPKMY…LPIYTAETLT (610 aa)). The 463-residue stretch at 28-490 (KMYVQFGEER…SDDEILAIKL (463 aa)) folds into the Sema domain. N-linked (GlcNAc...) asparagine glycosylation is found at Asn-44 and Asn-71. Intrachain disulfides connect Cys-97-Cys-107 and Cys-125-Cys-134. N-linked (GlcNAc...) asparagine glycans are attached at residues Asn-163 and Asn-267. 2 cysteine pairs are disulfide-bonded: Cys-244–Cys-358 and Cys-268–Cys-317. N-linked (GlcNAc...) asparagine glycosylation occurs at Asn-360. 2 disulfide bridges follow: Cys-493–Cys-512 and Cys-504–Cys-521. Asn-539 carries an N-linked (GlcNAc...) asparagine glycan. Residues 631 to 651 (IAIVTSCLGALVVGFISGFLF) form a helical membrane-spanning segment. The Cytoplasmic portion of the chain corresponds to 652–730 (SRRCRGEDYT…PIQKVKKTYI (79 aa)). Positions 708 to 720 (ANGKNANSSAENK) are enriched in low complexity. The segment at 708–730 (ANGKNANSSAENKPIQKVKKTYI) is disordered.

It belongs to the semaphorin family. As to expression, dynamically expressed on a subset of axon pathways in the developing CNS and on circumferential bands of epithelial cells in developing limb buds.

It is found in the membrane. Functionally, plays a role in growth cones guidance. The polypeptide is Semaphorin-1A (SEMA-1A) (Schistocerca americana (American grasshopper)).